The primary structure comprises 191 residues: Ferric nitrobindin-like protein (191 aa).

The GXWXGXG motif lies at 20 to 26 (GNWAGAG).

It belongs to the nitrobindin family.

This is Ferric nitrobindin-like protein from Streptomyces avermitilis (strain ATCC 31267 / DSM 46492 / JCM 5070 / NBRC 14893 / NCIMB 12804 / NRRL 8165 / MA-4680).